Reading from the N-terminus, the 289-residue chain is tRNA dimethylallyltransferase (289 aa).

9–16 (GTTASGKT) serves as a coordination point for ATP. 11–16 (TASGKT) contributes to the substrate binding site. Positions 34–37 (DSLC) are interaction with substrate tRNA.

This sequence belongs to the IPP transferase family. Monomer. Requires Mg(2+) as cofactor.

It catalyses the reaction adenosine(37) in tRNA + dimethylallyl diphosphate = N(6)-dimethylallyladenosine(37) in tRNA + diphosphate. In terms of biological role, catalyzes the transfer of a dimethylallyl group onto the adenine at position 37 in tRNAs that read codons beginning with uridine, leading to the formation of N6-(dimethylallyl)adenosine (i(6)A). The polypeptide is tRNA dimethylallyltransferase (Campylobacter jejuni subsp. doylei (strain ATCC BAA-1458 / RM4099 / 269.97)).